A 226-amino-acid polypeptide reads, in one-letter code: tRNA (guanine-N(7)-)-methyltransferase (226 aa).

The S-adenosyl-L-methionine site is built by Asp59, Glu84, and Asp111. Asp169 is a substrate binding site.

The protein belongs to the class I-like SAM-binding methyltransferase superfamily. TrmB family.

The catalysed reaction is guanosine(46) in tRNA + S-adenosyl-L-methionine = N(7)-methylguanosine(46) in tRNA + S-adenosyl-L-homocysteine. It participates in tRNA modification; N(7)-methylguanine-tRNA biosynthesis. In terms of biological role, catalyzes the formation of N(7)-methylguanine at position 46 (m7G46) in tRNA. This Chloroherpeton thalassium (strain ATCC 35110 / GB-78) protein is tRNA (guanine-N(7)-)-methyltransferase.